The primary structure comprises 134 residues: Small ribosomal subunit protein uS11 (134 aa).

The tract at residues methionine 1 to threonine 22 is disordered. Residues alanine 9–asparagine 18 are compositionally biased toward basic residues.

This sequence belongs to the universal ribosomal protein uS11 family. In terms of assembly, part of the 30S ribosomal subunit. Interacts with proteins S7 and S18. Binds to IF-3.

Located on the platform of the 30S subunit, it bridges several disparate RNA helices of the 16S rRNA. Forms part of the Shine-Dalgarno cleft in the 70S ribosome. The chain is Small ribosomal subunit protein uS11 from Kocuria rhizophila (strain ATCC 9341 / DSM 348 / NBRC 103217 / DC2201).